Consider the following 152-residue polypeptide: Putative multi-protein-binding factor 1 (152 aa).

Residues 1-24 (MSDDWESKTVIGSRARVGGGGPRA) are disordered. Residues 86 to 140 (IIKGRSEKGLTQKELAVKINEKPQVVNDYESGRAQPNQQVLSKMERVLGIKLRGK) form the HTH cro/C1-type domain. The segment at residues 97–116 (QKELAVKINEKPQVVNDYES) is a DNA-binding region (H-T-H motif).

Belongs to the MBF1 family.

Transcriptional coactivator that stimulates GCN4-dependent transcriptional activity by bridging the DNA-binding region of GCN4 and TBP (SPT15), thereby recruiting TBP to GCN4-bound promoters. Involved in induction of the ribosome quality control (RQC) pathway; a pathway that degrades nascent peptide chains during problematic translation. Required to prevent stalled ribosomes from frameshifting. The protein is Putative multi-protein-binding factor 1 (MBF1) of Yarrowia lipolytica (strain CLIB 122 / E 150) (Yeast).